The sequence spans 535 residues: Protein translocase subunit SecD (535 aa).

6 helical membrane-spanning segments follow: residues 5-25 (LTWKVVVIVAVLLVFAFGIIG), 377-397 (AIIGFVAVIIFMLIYYKGAGI), 402-421 (SLLLNLVILLGFMGYFGAVL), 425-444 (GIAGVILTVGMGVDSNVLIF), 469-489 (WLTIIDTHVTTIVSAIILFLF), and 496-516 (GFAVTLSFGLFANLFTAVFVS).

This sequence belongs to the SecD/SecF family. SecD subfamily. As to quaternary structure, forms a complex with SecF. Part of the essential Sec protein translocation apparatus which comprises SecA, SecYEG and auxiliary proteins SecDF. Other proteins may also be involved.

It is found in the cell inner membrane. Its function is as follows. Part of the Sec protein translocase complex. Interacts with the SecYEG preprotein conducting channel. SecDF uses the proton motive force (PMF) to complete protein translocation after the ATP-dependent function of SecA. This is Protein translocase subunit SecD from Koribacter versatilis (strain Ellin345).